The following is a 601-amino-acid chain: Tubulin polyglutamylase ttll-4 (601 aa).

Residues 1-18 (MSSGYSSAPSVSHTSSDT) show a composition bias toward polar residues. The tract at residues 1–37 (MSSGYSSAPSVSHTSSDTDLNRIDSYDDGAEETTDEQ) is disordered. The TTL domain maps to 138–476 (QARLTWCHNS…YVPPSFDKLS (339 aa)). ATP contacts are provided by residues Lys254, 260-261 (RG), 282-285 (QHYI), and 295-297 (KFD). Arg260 contributes to the a protein binding site. Arg321 serves as a coordination point for L-glutamate. 342 to 343 (TN) contributes to the ATP binding site. Tyr344, Ser345, and Lys362 together coordinate L-glutamate. Mg(2+)-binding residues include Asp422, Glu435, and Asn437. Residue Lys453 participates in L-glutamate binding.

Belongs to the tubulin--tyrosine ligase family. The cofactor is Mg(2+). In terms of tissue distribution, expressed in many sensory neurons in amphid.

It catalyses the reaction L-glutamyl-[protein] + L-glutamate + ATP = gamma-L-glutamyl-L-glutamyl-[protein] + ADP + phosphate + H(+). Its function is as follows. Monoglutamylase which modifies tubulin, adding a single glutamate on the gamma-carboxyl group of specific glutamate residues of target proteins. Involved in the side-chain initiation step of the polyglutamylation reaction but not in the elongation step. Preferentially modifies beta-tail tubulin over the alpha-tubulin. Involved in side-chain glutamylation of tubulin in sensory cilia. Together with ttll-5 and ttll-11, required for male mating. This is Tubulin polyglutamylase ttll-4 from Caenorhabditis elegans.